A 122-amino-acid chain; its full sequence is Fluoride-specific ion channel FluC 2 (122 aa).

Transmembrane regions (helical) follow at residues Val4–Val24, Leu38–Ala58, Ala63–Leu83, and Ala96–Gln116. Residues Gly73 and Thr76 each contribute to the Na(+) site.

This sequence belongs to the fluoride channel Fluc/FEX (TC 1.A.43) family.

The protein localises to the cell membrane. It carries out the reaction fluoride(in) = fluoride(out). Its activity is regulated as follows. Na(+) is not transported, but it plays an essential structural role and its presence is essential for fluoride channel function. Fluoride-specific ion channel. Important for reducing fluoride concentration in the cell, thus reducing its toxicity. This chain is Fluoride-specific ion channel FluC 2, found in Mycolicibacterium paratuberculosis (strain ATCC BAA-968 / K-10) (Mycobacterium paratuberculosis).